Reading from the N-terminus, the 52-residue chain is Large ribosomal subunit protein bL32c (52 aa).

This sequence belongs to the bacterial ribosomal protein bL32 family.

The protein localises to the plastid. The protein resides in the chloroplast. The chain is Large ribosomal subunit protein bL32c from Aethionema grandiflorum (Persian stone-cress).